We begin with the raw amino-acid sequence, 918 residues long: MGTTAPGPIHLLELCDQKLMEFLCNMDNKDLVWLEEIQEEAERMFTREFSKEPELMPKTPSQKNRRKKRRISYVQDENRDPIRRRLSRRKSRSSQLSSRRLRSKDSVEKLATVVGENGSVLRRVTRAAAAAAAATMALAAPSSPTPESPTMLTKKPEDNHTQCQLVPVVEIGISERQNAEQHVTQLMSTEPLPRTLSPTPASATAPTSQGIPTSDEESTPKKSKARILESITVSSLMATPQDPKGQGVGTGRSASKLRIAQVSPGPRDSPAFPDSPWRERVLAPILPDNFSTPTGSRTDSQSVRHSPIAPSSPSPQVLAQKYSLVAKQESVVRRASRRLAKKTAEEPAASGRIICHSYLERLLNVEVPQKVGSEQKEPPEEAEPVAAAEPEVPENNGNNSWPHNDTEIANSTPNPKPAASSPETPSAGQQEAKTDQADGPREPPQSARRKRSYKQAVSELDEEQHLEDEELQPPRSKTPSSPCPASKVVRPLRTFLHTVQRNQMLMTPTSAPRSVMKSFIKRNTPLRMDPKCSFVEKERQRLENLRRKEEAEQLRRQKVEEDKRRRLEEVKLKREERLRKVLQARERVEQMKEEKKKQIEQKFAQIDEKTEKAKEERLAEEKAKKKAAAKKMEEVEARRKQEEEARRLRWLQQEEEERRHQELLQKKKEEEQERLRKAAEAKRLAEQREQERREQERREQERREQERREQERREQERQLAEQERRREQERLQAERELQEREKALRLQKEQLQRELEEKKKKEEQQRLAERQLQEEQEKKAKEAAGASKALNVTVDVQSPACTSYQMTPQGHRAPPKINPDNYGMDLNSDDSTDDEAHPRKPIPTWARGTPLSQAIIHQYYHPPNLLELFGTILPLDLEDIFKKSKPRYHKRTSSAVWNSPPLQGARVPSSLAYSLKKH.

The interval 48–105 (EFSKEPELMPKTPSQKNRRKKRRISYVQDENRDPIRRRLSRRKSRSSQLSSRRLRSKD) is disordered. Phosphoserine is present on residues Ser72, Ser119, Ser143, and Ser148. The tract at residues 124–248 (VTRAAAAAAA…TPQDPKGQGV (125 aa)) is interaction with CBX5. Residues 138–159 (LAAPSSPTPESPTMLTKKPEDN) are disordered. Thr150 carries the post-translational modification Phosphothreonine. The short motif at 167-171 (PVVEI) is the PXVXL/I motif element. The disordered stretch occupies residues 190 to 253 (EPLPRTLSPT…KGQGVGTGRS (64 aa)). Phosphothreonine is present on Thr195. Ser197 is subject to Phosphoserine. Over residues 197 to 208 (SPTPASATAPTS) the composition is skewed to low complexity. A phosphothreonine mark is found at Thr199 and Thr213. Position 214 is a phosphoserine (Ser214). A phosphothreonine mark is found at Thr219 and Thr239. Phosphoserine occurs at positions 263, 269, and 275. The segment at 285–316 (ILPDNFSTPTGSRTDSQSVRHSPIAPSSPSPQ) is disordered. Positions 289–316 (NFSTPTGSRTDSQSVRHSPIAPSSPSPQ) are enriched in polar residues. A Phosphothreonine modification is found at Thr292. Residues Ser296, Ser306, Ser312, Ser314, and Ser330 each carry the phosphoserine modification. Residues 371 to 489 (VGSEQKEPPE…SSPCPASKVV (119 aa)) are disordered. The span at 384–394 (PVAAAEPEVPE) shows a compositional bias: low complexity. 2 stretches are compositionally biased toward polar residues: residues 395–413 (NNGN…NSTP) and 421–431 (SPETPSAGQQE). Ser400 is subject to Phosphoserine. Position 406 is a phosphothreonine (Thr406). Over residues 432-441 (AKTDQADGPR) the composition is skewed to basic and acidic residues. Phosphoserine is present on Ser446. Residues 459–471 (ELDEEQHLEDEEL) show a composition bias toward acidic residues. Position 476 is a phosphoserine (Ser476). Residue Thr478 is modified to Phosphothreonine. 3 positions are modified to phosphoserine: Ser480, Ser510, and Ser514. The interval 531–765 (KCSFVEKERQ…EEKKKKEEQQ (235 aa)) is SAH. Basic and acidic residues-rich tracts occupy residues 607–623 (DEKT…EEKA) and 630–640 (KKMEEVEARRK). Disordered stretches follow at residues 607-640 (DEKT…ARRK), 660-740 (HQEL…LQER), 754-787 (ELEE…AGAS), and 826-845 (LNSD…IPTW). Over residues 754–782 (ELEEKKKKEEQQRLAERQLQEEQEKKAKE) the composition is skewed to basic and acidic residues. The interaction with AURKC stretch occupies residues 822-897 (YGMDLNSDDS…YHKRTSSAVW (76 aa)). The tract at residues 826–900 (LNSDDSTDDE…RTSSAVWNSP (75 aa)) is IN box. Ser828 and Ser831 each carry phosphoserine. Thr832 is modified (phosphothreonine). Residue Thr892 is modified to Phosphothreonine; by AURKB and AURKC. 2 positions are modified to phosphoserine; by AURKB and AURKC: Ser893 and Ser894. 2 positions are modified to phosphoserine: Ser899 and Ser914.

It belongs to the INCENP family. As to quaternary structure, component of the chromosomal passenger complex (CPC) composed of at least BIRC5/survivin, CDCA8/borealin, INCENP, AURKB or AURKC; in the complex binds directly to AURKB or AURKC via the IN box, and forms a triple-helix bundle-based subcomplex with BIRC5 and CDCA8 via its N-terminus. The reported homodimerization is questioned as the SAH domain is shown to be monomeric. Interacts with H2AZ1. Interacts with CBX1 and CBX3. Interacts with tubulin beta chain. Interacts with EVI5. Interacts with CBX5; POGZ and INCENP compete for interaction with CBX5; regulates INCENP (and probably CPC) localization to centromeres in interphase and not required for proper mitotic progression or sister chromatid cohesion. Interacts with POGZ. Interacts with JTB. Phosphorylation by AURKB or AURKC at its C-terminal part is important for AURKB or AURKC activation by INCENP.

The protein localises to the nucleus. The protein resides in the chromosome. It is found in the centromere. It localises to the cytoplasm. Its subcellular location is the cytoskeleton. The protein localises to the spindle. The protein resides in the midbody. It is found in the kinetochore. Its function is as follows. Component of the chromosomal passenger complex (CPC), a complex that acts as a key regulator of mitosis. The CPC complex has essential functions at the centromere in ensuring correct chromosome alignment and segregation and is required for chromatin-induced microtubule stabilization and spindle assembly. Acts as a scaffold regulating CPC localization and activity. The C-terminus associates with AURKB or AURKC, the N-terminus associated with BIRC5/survivin and CDCA8/borealin tethers the CPC to the inner centromere, and the microtubule binding activity within the central SAH domain directs AURKB/C toward substrates near microtubules. The flexibility of the SAH domain is proposed to allow AURKB/C to follow substrates on dynamic microtubules while ensuring CPC docking to static chromatin. Activates AURKB and AURKC. Required for localization of CBX5 to mitotic centromeres. Controls the kinetochore localization of BUB1. This is Inner centromere protein (INCENP) from Homo sapiens (Human).